Consider the following 630-residue polypeptide: Biosynthetic arginine decarboxylase (630 aa).

N6-(pyridoxal phosphate)lysine is present on Lys-99. A substrate-binding site is contributed by 281–291 (VDIGGGLGVDY).

It belongs to the Orn/Lys/Arg decarboxylase class-II family. SpeA subfamily. It depends on Mg(2+) as a cofactor. Requires pyridoxal 5'-phosphate as cofactor.

The catalysed reaction is L-arginine + H(+) = agmatine + CO2. It participates in amine and polyamine biosynthesis; agmatine biosynthesis; agmatine from L-arginine: step 1/1. Its function is as follows. Catalyzes the biosynthesis of agmatine from arginine. This chain is Biosynthetic arginine decarboxylase, found in Bacteroides fragilis (strain ATCC 25285 / DSM 2151 / CCUG 4856 / JCM 11019 / LMG 10263 / NCTC 9343 / Onslow / VPI 2553 / EN-2).